The following is a 123-amino-acid chain: Small ribosomal subunit protein uS12cz/uS12cy (123 aa).

This sequence belongs to the universal ribosomal protein uS12 family. Part of the 30S ribosomal subunit.

It is found in the plastid. Its subcellular location is the chloroplast. With S4 and S5 plays an important role in translational accuracy. Located at the interface of the 30S and 50S subunits. This chain is Small ribosomal subunit protein uS12cz/uS12cy (rps12-A), found in Nymphaea alba (White water-lily).